Reading from the N-terminus, the 295-residue chain is UDP-N-acetylenolpyruvoylglucosamine reductase (295 aa).

Positions 24-188 (KVGGNAEIFF…LKVVFKINKG (165 aa)) constitute an FAD-binding PCMH-type domain. The active site involves R168. The active-site Proton donor is the S217. E287 is an active-site residue.

The protein belongs to the MurB family. FAD is required as a cofactor.

It is found in the cytoplasm. The enzyme catalyses UDP-N-acetyl-alpha-D-muramate + NADP(+) = UDP-N-acetyl-3-O-(1-carboxyvinyl)-alpha-D-glucosamine + NADPH + H(+). It functions in the pathway cell wall biogenesis; peptidoglycan biosynthesis. Its function is as follows. Cell wall formation. This Rickettsia peacockii (strain Rustic) protein is UDP-N-acetylenolpyruvoylglucosamine reductase.